Reading from the N-terminus, the 275-residue chain is Pyrroline-5-carboxylate reductase (275 aa).

It belongs to the pyrroline-5-carboxylate reductase family.

It is found in the cytoplasm. It carries out the reaction L-proline + NADP(+) = (S)-1-pyrroline-5-carboxylate + NADPH + 2 H(+). The catalysed reaction is L-proline + NAD(+) = (S)-1-pyrroline-5-carboxylate + NADH + 2 H(+). The protein operates within amino-acid biosynthesis; L-proline biosynthesis; L-proline from L-glutamate 5-semialdehyde: step 1/1. In terms of biological role, catalyzes the reduction of 1-pyrroline-5-carboxylate (PCA) to L-proline. In Pasteurella multocida (strain Pm70), this protein is Pyrroline-5-carboxylate reductase.